The sequence spans 233 residues: Protein-methionine-sulfoxide reductase heme-binding subunit MsrQ (233 aa).

The next 6 membrane-spanning stretches (helical) occupy residues 13–33 (IKAA…HGLW), 44–64 (ALTR…LCVS), 81–101 (MLGL…LWLD), 117–137 (PFIT…LTSS), 151–171 (SLHR…LWLV), and 174–194 (VALL…GWRV). Residues 50 to 164 (GIWTLNFLFL…AVYAVAILGV (115 aa)) form the Ferric oxidoreductase domain.

This sequence belongs to the MsrQ family. As to quaternary structure, heterodimer of a catalytic subunit (MsrP) and a heme-binding subunit (MsrQ).

Its subcellular location is the cell inner membrane. Part of the MsrPQ system that repairs oxidized periplasmic proteins containing methionine sulfoxide residues (Met-O), using respiratory chain electrons. Thus protects these proteins from oxidative-stress damage caused by reactive species of oxygen and chlorine generated by the host defense mechanisms. MsrPQ is essential for the maintenance of envelope integrity under bleach stress, rescuing a wide series of structurally unrelated periplasmic proteins from methionine oxidation. MsrQ provides electrons for reduction to the reductase catalytic subunit MsrP, using the quinone pool of the respiratory chain. Probably involved in protection against reactive chlorine species (RCS) generated by chlorite and hypochlorite. The protein is Protein-methionine-sulfoxide reductase heme-binding subunit MsrQ of Azospira oryzae (strain ATCC BAA-33 / DSM 13638 / PS) (Dechlorosoma suillum).